We begin with the raw amino-acid sequence, 96 residues long: Small ribosomal subunit protein bS6 (96 aa).

Belongs to the bacterial ribosomal protein bS6 family.

In terms of biological role, binds together with bS18 to 16S ribosomal RNA. The chain is Small ribosomal subunit protein bS6 (rpsF) from Mycobacterium bovis (strain ATCC BAA-935 / AF2122/97).